Consider the following 404-residue polypeptide: Sorting nexin-32 (404 aa).

Residues Met1 to Asn10 show a composition bias toward basic and acidic residues. A disordered region spans residues Met1 to Val29. Polar residues predominate over residues Glu11–Asp20. A PX domain is found at Leu21–Leu168. Residues Thr255 to Arg336 are a coiled coil.

The protein belongs to the sorting nexin family.

In terms of biological role, may be involved in several stages of intracellular trafficking. The protein is Sorting nexin-32 (Snx32) of Mus musculus (Mouse).